Reading from the N-terminus, the 962-residue chain is Alpha-glucan phosphorylase 1 (962 aa).

The N-terminal 63 residues, 1 to 63 (MDTMRISGVS…RSFLSVKSIS (63 aa)), are a transit peptide targeting the chloroplast. The disordered stretch occupies residues 525–552 (AKDAQNGVKTEQEEEKTAGEEEEDEVIP). Lysine 808 carries the N6-(pyridoxal phosphate)lysine modification.

It belongs to the glycogen phosphorylase family. Requires pyridoxal 5'-phosphate as cofactor.

The protein resides in the plastid. The protein localises to the chloroplast stroma. The catalysed reaction is [(1-&gt;4)-alpha-D-glucosyl](n) + phosphate = [(1-&gt;4)-alpha-D-glucosyl](n-1) + alpha-D-glucose 1-phosphate. Functionally, phosphorylase is an important allosteric enzyme in carbohydrate metabolism. Enzymes from different sources differ in their regulatory mechanisms and in their natural substrates. However, all known phosphorylases share catalytic and structural properties. May be not required for the degradation of starch, but the phosphorolysis of starch may play an important role in water stress tolerance. In Arabidopsis thaliana (Mouse-ear cress), this protein is Alpha-glucan phosphorylase 1 (PHS1).